A 265-amino-acid polypeptide reads, in one-letter code: Undecaprenyl-diphosphatase 1 (265 aa).

Transmembrane regions (helical) follow at residues 4-24 (IIIA…PISS), 42-62 (AKTF…ILYH), 84-104 (FHVF…HDVI), 108-128 (LFQP…MILA), 184-204 (SEFS…LDLL), 217-237 (MFAV…VTFL), and 245-265 (LKPF…FVLL).

The protein belongs to the UppP family.

Its subcellular location is the cell membrane. It carries out the reaction di-trans,octa-cis-undecaprenyl diphosphate + H2O = di-trans,octa-cis-undecaprenyl phosphate + phosphate + H(+). Catalyzes the dephosphorylation of undecaprenyl diphosphate (UPP). Confers resistance to bacitracin. The polypeptide is Undecaprenyl-diphosphatase 1 (Bacillus cereus (strain ZK / E33L)).